Consider the following 623-residue polypeptide: Chaperone protein DnaK (623 aa).

At T175 the chain carries Phosphothreonine; by autocatalysis. Residues 578–623 (ANPEGAPGAGFDPNNMGGANAGNASAGNDKKDDNVVDADFKVEDDK) form a disordered region. Residues 591 to 604 (NNMGGANAGNASAG) show a composition bias toward low complexity. The span at 605 to 623 (NDKKDDNVVDADFKVEDDK) shows a compositional bias: basic and acidic residues.

The protein belongs to the heat shock protein 70 family.

In terms of biological role, acts as a chaperone. The polypeptide is Chaperone protein DnaK (Clostridium botulinum (strain 657 / Type Ba4)).